Consider the following 554-residue polypeptide: uncharacterized protein (554 aa).

To M.jannaschii MJ0047, MJ0162 and MJ1236.

This is an uncharacterized protein from Synechocystis sp. (strain ATCC 27184 / PCC 6803 / Kazusa).